A 304-amino-acid chain; its full sequence is Quinolinate synthase (304 aa).

Iminosuccinate contacts are provided by histidine 24 and serine 41. Residue cysteine 86 coordinates [4Fe-4S] cluster. Iminosuccinate-binding positions include 112 to 114 and serine 129; that span reads YVN. Position 171 (cysteine 171) interacts with [4Fe-4S] cluster. Residues 197 to 199 and threonine 214 contribute to the iminosuccinate site; that span reads HPE. Cysteine 259 serves as a coordination point for [4Fe-4S] cluster.

This sequence belongs to the quinolinate synthase family. Type 2 subfamily. It depends on [4Fe-4S] cluster as a cofactor.

Its subcellular location is the cytoplasm. The enzyme catalyses iminosuccinate + dihydroxyacetone phosphate = quinolinate + phosphate + 2 H2O + H(+). It functions in the pathway cofactor biosynthesis; NAD(+) biosynthesis; quinolinate from iminoaspartate: step 1/1. Functionally, catalyzes the condensation of iminoaspartate with dihydroxyacetone phosphate to form quinolinate. The polypeptide is Quinolinate synthase (Geotalea uraniireducens (strain Rf4) (Geobacter uraniireducens)).